An 877-amino-acid chain; its full sequence is Alanine--tRNA ligase (877 aa).

Residues histidine 566, histidine 570, cysteine 668, and histidine 672 each contribute to the Zn(2+) site.

The protein belongs to the class-II aminoacyl-tRNA synthetase family. The cofactor is Zn(2+).

Its subcellular location is the cytoplasm. It catalyses the reaction tRNA(Ala) + L-alanine + ATP = L-alanyl-tRNA(Ala) + AMP + diphosphate. Catalyzes the attachment of alanine to tRNA(Ala) in a two-step reaction: alanine is first activated by ATP to form Ala-AMP and then transferred to the acceptor end of tRNA(Ala). Also edits incorrectly charged Ser-tRNA(Ala) and Gly-tRNA(Ala) via its editing domain. The chain is Alanine--tRNA ligase from Staphylococcus aureus (strain USA300 / TCH1516).